The chain runs to 100 residues: Urease subunit gamma (100 aa).

Belongs to the urease gamma subunit family. As to quaternary structure, heterotrimer of UreA (gamma), UreB (beta) and UreC (alpha) subunits. Three heterotrimers associate to form the active enzyme.

It is found in the cytoplasm. The catalysed reaction is urea + 2 H2O + H(+) = hydrogencarbonate + 2 NH4(+). It participates in nitrogen metabolism; urea degradation; CO(2) and NH(3) from urea (urease route): step 1/1. This is Urease subunit gamma from Prochlorococcus marinus (strain MIT 9312).